Reading from the N-terminus, the 734-residue chain is Photosystem I P700 chlorophyll a apoprotein A2 (734 aa).

The next 8 helical transmembrane spans lie at 46–69, 135–158, 175–199, 273–291, 330–353, 369–395, 417–439, and 517–535; these read IFAS…FHVA, LYTG…LHLQ, LNHH…HVAI, MAHH…GHMY, LHFQ…QHMY, AALY…IFFI, AIIS…LYVH, and FLVH…LILV. Positions 559 and 568 each coordinate [4Fe-4S] cluster. Helical transmembrane passes span 575-596 and 643-665; these read AFYL…YWHW and LSVW…MFLI. Positions 654, 662, and 670 each coordinate chlorophyll a. Tryptophan 671 is a binding site for phylloquinone. The helical transmembrane segment at 707 to 727 threads the bilayer; it reads LVGLAHFSVGYIFTYAAFLIA.

The protein belongs to the PsaA/PsaB family. The PsaA/B heterodimer binds the P700 chlorophyll special pair and subsequent electron acceptors. PSI consists of a core antenna complex that captures photons, and an electron transfer chain that converts photonic excitation into a charge separation. The eukaryotic PSI reaction center is composed of at least 11 subunits. P700 is a chlorophyll a/chlorophyll a' dimer, A0 is one or more chlorophyll a, A1 is one or both phylloquinones and FX is a shared 4Fe-4S iron-sulfur center. serves as cofactor.

It localises to the plastid. The protein localises to the chloroplast thylakoid membrane. It catalyses the reaction reduced [plastocyanin] + hnu + oxidized [2Fe-2S]-[ferredoxin] = oxidized [plastocyanin] + reduced [2Fe-2S]-[ferredoxin]. PsaA and PsaB bind P700, the primary electron donor of photosystem I (PSI), as well as the electron acceptors A0, A1 and FX. PSI is a plastocyanin-ferredoxin oxidoreductase, converting photonic excitation into a charge separation, which transfers an electron from the donor P700 chlorophyll pair to the spectroscopically characterized acceptors A0, A1, FX, FA and FB in turn. Oxidized P700 is reduced on the lumenal side of the thylakoid membrane by plastocyanin. The protein is Photosystem I P700 chlorophyll a apoprotein A2 of Daucus carota (Wild carrot).